Here is a 275-residue protein sequence, read N- to C-terminus: tRNA-splicing endonuclease subunit SEN34 (275 aa).

Residues tyrosine 209, histidine 217, and lysine 250 contribute to the active site.

This sequence belongs to the tRNA-intron endonuclease family. As to quaternary structure, heterotetramer composed of SEN2, SEN15, SEN34 and SEN54. Interacts directly with SEN15.

The protein resides in the nucleus. Its subcellular location is the endomembrane system. It is found in the mitochondrion outer membrane. The enzyme catalyses pretRNA = a 3'-half-tRNA molecule with a 5'-OH end + a 5'-half-tRNA molecule with a 2',3'-cyclic phosphate end + an intron with a 2',3'-cyclic phosphate and a 5'-hydroxyl terminus.. Constitutes one of the two catalytic subunit of the tRNA-splicing endonuclease complex, a complex responsible for identification and cleavage of the splice sites in pre-tRNA. It cleaves pre-tRNA at the 5'- and 3'-splice sites to release the intron. The products are an intron and two tRNA half-molecules bearing 2',3'-cyclic phosphate and 5'-OH termini. There are no conserved sequences at the splice sites, but the intron is invariably located at the same site in the gene, placing the splice sites an invariant distance from the constant structural features of the tRNA body. It probably carries the active site for 3'-splice site cleavage. The chain is tRNA-splicing endonuclease subunit SEN34 (SEN34) from Saccharomyces cerevisiae (strain ATCC 204508 / S288c) (Baker's yeast).